A 131-amino-acid chain; its full sequence is Small ribosomal subunit protein uS8 (131 aa).

Positions 1–27 are disordered; sequence MSMTDPVADMLTRIRNGQRASKNEVSM.

The protein belongs to the universal ribosomal protein uS8 family. As to quaternary structure, part of the 30S ribosomal subunit. Contacts proteins S5 and S12.

Functionally, one of the primary rRNA binding proteins, it binds directly to 16S rRNA central domain where it helps coordinate assembly of the platform of the 30S subunit. This is Small ribosomal subunit protein uS8 from Thioalkalivibrio sulfidiphilus (strain HL-EbGR7).